We begin with the raw amino-acid sequence, 308 residues long: Ribosomal RNA small subunit methyltransferase H (308 aa).

Residues 34 to 36 (GGH), aspartate 54, phenylalanine 80, aspartate 101, and glutamine 108 contribute to the S-adenosyl-L-methionine site.

It belongs to the methyltransferase superfamily. RsmH family.

It localises to the cytoplasm. It catalyses the reaction cytidine(1402) in 16S rRNA + S-adenosyl-L-methionine = N(4)-methylcytidine(1402) in 16S rRNA + S-adenosyl-L-homocysteine + H(+). In terms of biological role, specifically methylates the N4 position of cytidine in position 1402 (C1402) of 16S rRNA. This is Ribosomal RNA small subunit methyltransferase H from Ureaplasma urealyticum serovar 10 (strain ATCC 33699 / Western).